Reading from the N-terminus, the 338-residue chain is Ribosomal RNA small subunit methyltransferase C (338 aa).

The protein belongs to the methyltransferase superfamily. RsmC family. In terms of assembly, monomer.

It is found in the cytoplasm. It carries out the reaction guanosine(1207) in 16S rRNA + S-adenosyl-L-methionine = N(2)-methylguanosine(1207) in 16S rRNA + S-adenosyl-L-homocysteine + H(+). Functionally, specifically methylates the guanine in position 1207 of 16S rRNA in the 30S particle. The protein is Ribosomal RNA small subunit methyltransferase C of Photorhabdus laumondii subsp. laumondii (strain DSM 15139 / CIP 105565 / TT01) (Photorhabdus luminescens subsp. laumondii).